A 589-amino-acid chain; its full sequence is Serine/threonine-protein kinase shk2 (589 aa).

Residues 23–125 (GIIRSGWVML…WMDLISSRAL (103 aa)) enclose the PH domain. The 14-residue stretch at 129–142 (VSSPMNPKHQVHVG) folds into the CRIB domain. The Protein kinase domain maps to 309–566 (FNVKHKLGQG…AAELLTHSFL (258 aa)). Residues 315–323 (LGQGASGSV) and Lys343 each bind ATP. Asp434 functions as the Proton acceptor in the catalytic mechanism.

This sequence belongs to the protein kinase superfamily. STE Ser/Thr protein kinase family. STE20 subfamily.

The enzyme catalyses L-seryl-[protein] + ATP = O-phospho-L-seryl-[protein] + ADP + H(+). It catalyses the reaction L-threonyl-[protein] + ATP = O-phospho-L-threonyl-[protein] + ADP + H(+). Functionally, forms an activated complex with GTP-bound Ras-like cdc42. Participates in Ras-dependent morphological control and mating response pathways. This Schizosaccharomyces pombe (strain 972 / ATCC 24843) (Fission yeast) protein is Serine/threonine-protein kinase shk2 (shk2).